Here is a 262-residue protein sequence, read N- to C-terminus: Acyl-[acyl-carrier-protein]--UDP-N-acetylglucosamine O-acyltransferase (262 aa).

It belongs to the transferase hexapeptide repeat family. LpxA subfamily. In terms of assembly, homotrimer.

The protein localises to the cytoplasm. It catalyses the reaction a (3R)-hydroxyacyl-[ACP] + UDP-N-acetyl-alpha-D-glucosamine = a UDP-3-O-[(3R)-3-hydroxyacyl]-N-acetyl-alpha-D-glucosamine + holo-[ACP]. It functions in the pathway glycolipid biosynthesis; lipid IV(A) biosynthesis; lipid IV(A) from (3R)-3-hydroxytetradecanoyl-[acyl-carrier-protein] and UDP-N-acetyl-alpha-D-glucosamine: step 1/6. Its function is as follows. Involved in the biosynthesis of lipid A, a phosphorylated glycolipid that anchors the lipopolysaccharide to the outer membrane of the cell. In Salmonella heidelberg (strain SL476), this protein is Acyl-[acyl-carrier-protein]--UDP-N-acetylglucosamine O-acyltransferase.